A 143-amino-acid polypeptide reads, in one-letter code: UPF0251 protein Rru_A1194 (143 aa).

A disordered region spans residues 100 to 143 (LDGSACPNRRQRRGPCARRGAAGALARQTGDEPPSSPTDNEKDD). A compositionally biased stretch (low complexity) spans 116 to 126 (ARRGAAGALAR).

Belongs to the UPF0251 family.

The chain is UPF0251 protein Rru_A1194 from Rhodospirillum rubrum (strain ATCC 11170 / ATH 1.1.1 / DSM 467 / LMG 4362 / NCIMB 8255 / S1).